We begin with the raw amino-acid sequence, 149 residues long: MQSLQVKILDERMRDQLPTYGTPGSAGLDLRACIDEAITIAPGQTVLVPTGLAIYVEDPRYAAFILPRSGLGHKHSIVLGNLVGLIDSDYQGQLMVSTWNRGSTTFKLEPMERLAQLVVMPVQQVELKVVEEFTESSRGAGGFGSTGRA.

Substrate contacts are provided by residues 68–70 (RSG), N81, 85–87 (LID), and M95.

It belongs to the dUTPase family. It depends on Mg(2+) as a cofactor.

The enzyme catalyses dUTP + H2O = dUMP + diphosphate + H(+). It participates in pyrimidine metabolism; dUMP biosynthesis; dUMP from dCTP (dUTP route): step 2/2. In terms of biological role, this enzyme is involved in nucleotide metabolism: it produces dUMP, the immediate precursor of thymidine nucleotides and it decreases the intracellular concentration of dUTP so that uracil cannot be incorporated into DNA. In Polynucleobacter necessarius subsp. necessarius (strain STIR1), this protein is Deoxyuridine 5'-triphosphate nucleotidohydrolase.